A 489-amino-acid polypeptide reads, in one-letter code: RNA polymerase II subunit 5-mediating protein homolog (489 aa).

Disordered regions lie at residues 141–188 (NSDE…MDEE), 200–329 (EEKE…EEDE), 396–415 (ILKT…SYNE), and 434–489 (FENQ…RQNK). Positions 157-168 (QKSTTTTTTTTT) are enriched in low complexity. Composition is skewed to basic and acidic residues over residues 169–188 (SKDK…MDEE) and 215–224 (FNKKFNKKLD). Acidic residues-rich tracts occupy residues 227-265 (GSDE…EDEK), 276-298 (EEDD…EYYD), and 315-329 (QGDD…EEDE). Over residues 396–413 (ILKTNSSGNLMSTIPKSY) the composition is skewed to polar residues. Residues 480–489 (SRFKSSRQNK) show a composition bias toward basic residues.

This sequence belongs to the RNA polymerase II subunit 5-mediating protein family.

The protein resides in the nucleus. This chain is RNA polymerase II subunit 5-mediating protein homolog (rmp), found in Dictyostelium discoideum (Social amoeba).